Consider the following 571-residue polypeptide: Dihydroxy-acid dehydratase (571 aa).

Residue cysteine 56 coordinates [2Fe-2S] cluster. Aspartate 88 contributes to the Mg(2+) binding site. A [2Fe-2S] cluster-binding site is contributed by cysteine 129. Residues aspartate 130 and lysine 131 each contribute to the Mg(2+) site. N6-carboxylysine is present on lysine 131. Residue cysteine 201 participates in [2Fe-2S] cluster binding. A Mg(2+)-binding site is contributed by glutamate 452. The Proton acceptor role is filled by serine 478.

The protein belongs to the IlvD/Edd family. Homodimer. It depends on [2Fe-2S] cluster as a cofactor. The cofactor is Mg(2+).

It carries out the reaction (2R)-2,3-dihydroxy-3-methylbutanoate = 3-methyl-2-oxobutanoate + H2O. The catalysed reaction is (2R,3R)-2,3-dihydroxy-3-methylpentanoate = (S)-3-methyl-2-oxopentanoate + H2O. The protein operates within amino-acid biosynthesis; L-isoleucine biosynthesis; L-isoleucine from 2-oxobutanoate: step 3/4. It participates in amino-acid biosynthesis; L-valine biosynthesis; L-valine from pyruvate: step 3/4. Its function is as follows. Functions in the biosynthesis of branched-chain amino acids. Catalyzes the dehydration of (2R,3R)-2,3-dihydroxy-3-methylpentanoate (2,3-dihydroxy-3-methylvalerate) into 2-oxo-3-methylpentanoate (2-oxo-3-methylvalerate) and of (2R)-2,3-dihydroxy-3-methylbutanoate (2,3-dihydroxyisovalerate) into 2-oxo-3-methylbutanoate (2-oxoisovalerate), the penultimate precursor to L-isoleucine and L-valine, respectively. The polypeptide is Dihydroxy-acid dehydratase (Streptococcus suis (strain 98HAH33)).